A 34-amino-acid chain; its full sequence is MFSHFEVSENRPRKQPRRKRISLGMINTVVSLDR.

Residues Met1–Pro12 are compositionally biased toward basic and acidic residues. A disordered region spans residues Met1–Ile21.

This is an uncharacterized protein from Saccharomyces cerevisiae (strain ATCC 204508 / S288c) (Baker's yeast).